A 220-amino-acid polypeptide reads, in one-letter code: pH-response regulator palI/RIM9 homolog 1 (220 aa).

The Cytoplasmic portion of the chain corresponds to 1–5; the sequence is MSHFK. A helical transmembrane segment spans residues 6-26; sequence IVFLTSLSLALVFELFNTISV. The Extracellular portion of the chain corresponds to 27-89; that stretch reads PITSHLFISE…NHAKYALSKL (63 aa). A helical transmembrane segment spans residues 90-110; sequence LLVHVLSFVCVLVFWLFAILI. Topologically, residues 111–121 are cytoplasmic; it reads CIKWLNTSKSV. The chain crosses the membrane as a helical span at residues 122-142; that stretch reads LLFAVGWSMVTFMVSLLGFLI. Topologically, residues 143–155 are extracellular; it reads DVLMFASHVTWSS. A helical membrane pass occupies residues 156 to 176; it reads WLMLVSAFFVALSGILLCLMI. At 177-220 the chain is on the cytoplasmic side; that stretch reads RDLSYRRFVKLQGEVDVCVPMTEPRDPDELNEIWKKKTSKREIL.

It belongs to the palI/RIM9 family.

It is found in the cell membrane. Required for the proteolytic cleavage of the transcription factor RIM101 in response to alkaline ambient pH. This Kluyveromyces lactis (strain ATCC 8585 / CBS 2359 / DSM 70799 / NBRC 1267 / NRRL Y-1140 / WM37) (Yeast) protein is pH-response regulator palI/RIM9 homolog 1.